The sequence spans 715 residues: Coiled-coil domain-containing protein 13 (715 aa).

Coiled-coil stretches lie at residues 16–105 (KAMQ…KERD) and 134–458 (ATKI…NVHY). The segment at 20 to 65 (EMQHKRLQKQMEKKREKELSLKSRADDQEEPLEVSDGLSLLHAGEP) is disordered. Residues 28–45 (KQMEKKREKELSLKSRAD) show a composition bias toward basic and acidic residues. S258, S469, and S536 each carry phosphoserine. Disordered stretches follow at residues 482–541 (EDPG…EQKG) and 607–645 (LEPG…DPSF). Positions 554–608 (QAAEVERDRLTEFVTVLQKRVEESNSKLLESERKLQEERHRTVVLEQHLEKIRLE) form a coiled coil. Over residues 625–637 (GLPTSNNRHNPTG) the composition is skewed to polar residues. A coiled-coil region spans residues 653–683 (VESQMEELTTRLAIQVEENEMLKAALGSALR).

As to quaternary structure, interacts with PCM1, CEP290 and PCNT.

The protein localises to the cytoplasm. It localises to the cytoskeleton. It is found in the microtubule organizing center. Its subcellular location is the centrosome. The protein resides in the centriolar satellite. The protein localises to the cilium basal body. Its function is as follows. Required for primary cilia formation and promotes the localization of the ciliopathy protein BBS4 to both centriolar satellites and cilia. The chain is Coiled-coil domain-containing protein 13 from Homo sapiens (Human).